Here is a 147-residue protein sequence, read N- to C-terminus: Deoxyuridine 5'-triphosphate nucleotidohydrolase (147 aa).

A Mg(2+)-binding site is contributed by R24. Residues 68–70 (PRS), 82–85 (GVID), Y88, G93, I95, and R111 contribute to the dUTP site.

The protein belongs to the dUTPase family. The cofactor is Mg(2+).

The enzyme catalyses dUTP + H2O = dUMP + diphosphate + H(+). In terms of biological role, this enzyme is involved in nucleotide metabolism: it produces dUMP, the immediate precursor of thymidine nucleotides and it decreases the intracellular concentration of dUTP so that uracil cannot be incorporated into DNA. The polypeptide is Deoxyuridine 5'-triphosphate nucleotidohydrolase (OPG046) (Homo sapiens (Human)).